A 646-amino-acid polypeptide reads, in one-letter code: Lipoteichoic acid synthase (646 aa).

Over 1 to 7 the chain is Cytoplasmic; the sequence is MSLPKKK. The chain crosses the membrane as a helical span at residues 8–28; sequence IGIFAFFLLTVFTITLKTYFS. At 29–43 the chain is on the extracellular side; it reads YYVDFSLGVKGLVQN. Residues 44–64 form a helical membrane-spanning segment; it reads LILLMNPYSLIALVLSVFLFF. At 65–68 the chain is on the cytoplasmic side; it reads KGKK. Residues 69–89 traverse the membrane as a helical segment; the sequence is AFWFIFIGGFLLTFLLYANVV. Over 90-119 the chain is Extracellular; sequence YFRFFSDFLTFSTLNQAGNVESMGGAVSAS. Residues 120–140 traverse the membrane as a helical segment; that stretch reads FKWYDFVYFIDTIIYLAILIF. At 141–153 the chain is on the cytoplasmic side; sequence KRKWLDNRAFSKK. Residues 154–174 form a helical membrane-spanning segment; that stretch reads FVPVVMATSVALFFLNLAFAE. Topologically, residues 175–646 are extracellular; sequence TDRPELLTRT…KSGPKGNEKK (472 aa). The Mn(2+) site is built by glutamate 255 and threonine 300. Threonine 300 is an active-site residue. A substrate-binding site is contributed by histidine 416. Positions 475 and 476 each coordinate Mn(2+).

The protein belongs to the LTA synthase family. Proteolytically cleaved.

It is found in the cell membrane. It localises to the secreted. Its pathway is cell wall biogenesis; lipoteichoic acid biosynthesis. In terms of biological role, catalyzes the polymerization of lipoteichoic acid (LTA) polyglycerol phosphate, a reaction that presumably uses phosphatidylglycerol (PG) as substrate. Is required for staphylococcal growth and cell division process. In Staphylococcus epidermidis (strain ATCC 35984 / DSM 28319 / BCRC 17069 / CCUG 31568 / BM 3577 / RP62A), this protein is Lipoteichoic acid synthase (ltaS).